The following is an 810-amino-acid chain: Actin-regulating kinase PRK1 (810 aa).

The 277-residue stretch at 22 to 298 folds into the Protein kinase domain; sequence AKIIKYLTSG…CQVLEEVSRL (277 aa). ATP-binding positions include 28–36 and K56; that span reads LTSGGFAQV. D158 functions as the Proton acceptor in the catalytic mechanism. S402, S428, and S484 each carry phosphoserine. 2 disordered regions span residues 552–668 and 733–761; these read FTGN…NVNI and GVLD…HLRT. T553 is subject to Phosphothreonine. The span at 553-566 shows a compositional bias: polar residues; that stretch reads TGNSVNNSRSASFD. A Phosphoserine modification is found at S556. Residues 567–588 are compositionally biased toward low complexity; it reads NNNVNGNGNNTNRRLVSSSTSS. 2 stretches are compositionally biased toward basic and acidic residues: residues 594–612 and 622–639; these read SDTK…EKRR and FDQH…DYYR. Positions 645-658 are enriched in low complexity; that stretch reads KKTQASAKTTSKPT. The span at 733–748 shows a compositional bias: basic and acidic residues; the sequence is GVLDIKTKSNGKDKSR. The segment at 743–756 is interaction with SH3 domain of ABP1; the sequence is GKDKSRPPRPPPKP.

The protein belongs to the protein kinase superfamily. Ser/Thr protein kinase family. In terms of assembly, interacts with ABP1, which is required for proper actin patch localization.

The protein resides in the cytoplasm. It is found in the cytoskeleton. It localises to the actin patch. The catalysed reaction is L-seryl-[protein] + ATP = O-phospho-L-seryl-[protein] + ADP + H(+). It carries out the reaction L-threonyl-[protein] + ATP = O-phospho-L-threonyl-[protein] + ADP + H(+). Its function is as follows. Protein kinase involved in the regulation of actin cytoskeleton organization and endocytosis. Phosphorylates PAN1 which disrupts the interaction between PAN1 and END3, and between PAN1 and SLA1. Phosphorylates SCD5. Preferentially, phosphorylates substrates on threonine residues in a [L/I/V/M]-x-x-[Q/N/T/S]-x-T-G motif. This Saccharomyces cerevisiae (strain ATCC 204508 / S288c) (Baker's yeast) protein is Actin-regulating kinase PRK1 (PRK1).